We begin with the raw amino-acid sequence, 183 residues long: Protein vem-1 (183 aa).

Residues Phe9–Thr29 traverse the membrane as a helical segment. The Cytochrome b5 heme-binding domain occupies Met47–Val146.

This sequence belongs to the cytochrome b5 family. MAPR subfamily. In terms of assembly, interacts with unc-40 (via cytoplasmic domain). In terms of tissue distribution, expressed in the AVG pioneer midline neuron and in several nerve ring neurons that extend projecting axons into the right ventral nerve cord.

It is found in the membrane. The protein resides in the cell projection. It localises to the axon. Transmembrane protein required for the axon guidance of a subset of ventral nerve cord-associated interneurons and motor neurons. May function with the netrin receptor unc-40 in axon guidance. This is Protein vem-1 from Caenorhabditis elegans.